The chain runs to 591 residues: Potassium-transporting ATPase potassium-binding subunit (591 aa).

The next 10 membrane-spanning stretches (helical) occupy residues 6 to 26, 63 to 83, 137 to 157, 179 to 199, 272 to 292, 303 to 323, 405 to 425, 444 to 464, 510 to 530, and 553 to 573; these read WFQI…LGVF, WTEY…MLYI, GLAY…IAFI, VLWV…SQGV, LSNL…TYTL, WAVW…VYWA, AGMY…GLMV, AMLV…ISSV, VAIG…MLAI, and LFSV…FFPA.

This sequence belongs to the KdpA family. The system is composed of three essential subunits: KdpA, KdpB and KdpC.

It is found in the cell inner membrane. Its function is as follows. Part of the high-affinity ATP-driven potassium transport (or Kdp) system, which catalyzes the hydrolysis of ATP coupled with the electrogenic transport of potassium into the cytoplasm. This subunit binds the periplasmic potassium ions and delivers the ions to the membrane domain of KdpB through an intramembrane tunnel. The chain is Potassium-transporting ATPase potassium-binding subunit from Koribacter versatilis (strain Ellin345).